We begin with the raw amino-acid sequence, 153 residues long: MSENKQALQVAALKNGTVIDHIPSEKLFTVVSLLGLEHMTTNITIGFNLDSKKLGKKGIIKIADKFFCDEEINRISVVAPHVKLNIIRDYEVVEKKEVRMPDELKAIVKCANPKCITNNEPMATLFHVIDKDNCVIKCHYCEKEQKREDITII.

Zn(2+)-binding residues include Cys110, Cys115, Cys138, and Cys141.

Belongs to the PyrI family. In terms of assembly, contains catalytic and regulatory chains. Zn(2+) serves as cofactor.

Its function is as follows. Involved in allosteric regulation of aspartate carbamoyltransferase. The protein is Aspartate carbamoyltransferase regulatory chain of Bacteroides fragilis (strain ATCC 25285 / DSM 2151 / CCUG 4856 / JCM 11019 / LMG 10263 / NCTC 9343 / Onslow / VPI 2553 / EN-2).